A 468-amino-acid chain; its full sequence is Peroxisome proliferator-activated receptor alpha (468 aa).

The interval methionine 1–glutamate 20 is disordered. A DNA-binding region (nuclear receptor) is located at residues asparagine 99–phenylalanine 173. NR C4-type zinc fingers lie at residues cysteine 102–cysteine 122 and cysteine 139–cysteine 161. An NR LBD domain is found at phenylalanine 239 to aspartate 466. Residues aspartate 304–leucine 433 form a required for heterodimerization with RXRA region.

Belongs to the nuclear hormone receptor family. NR1 subfamily. In terms of assembly, heterodimer; with RXRA. This heterodimerization is required for DNA binding and transactivation activity. Interacts with NCOA3 coactivator. Interacts with CITED2; the interaction stimulates its transcriptional activity. Also interacts with PPARBP in vitro. Interacts with AKAP13, LPIN1, PRDM16 and coactivator NCOA6. Interacts with ASXL1 and ASXL2. Interacts with PER2. Interacts with SIRT1; the interaction seems to be modulated by NAD(+) levels. Interacts with CRY1 and CRY2. In hepatocytes, interacts with PAQR3 and HUWE1; the interactions promote PPARA poylubiquitination and HUWE1-mediated degradation. In terms of processing, ubiquitinated by E3 ubiquitin-protein ligase HUWE1; leading to proteasomal degradation. Post-translationally, phosphorylated.

It is found in the nucleus. In terms of biological role, ligand-activated transcription factor. Key regulator of lipid metabolism. Activated by the endogenous ligand 1-palmitoyl-2-oleoyl-sn-glycerol-3-phosphocholine (16:0/18:1-GPC). Activated by oleylethanolamide, a naturally occurring lipid that regulates satiety. Receptor for peroxisome proliferators such as hypolipidemic drugs and fatty acids. Regulates the peroxisomal beta-oxidation pathway of fatty acids. Functions as a transcription activator for the ACOX1 and P450 genes. Transactivation activity requires heterodimerization with RXRA and is antagonized by NR2C2. May be required for the propagation of clock information to metabolic pathways regulated by PER2. The sequence is that of Peroxisome proliferator-activated receptor alpha (PPARA) from Phascolarctos cinereus (Koala).